The primary structure comprises 447 residues: Tubulin beta chain (447 aa).

8 residues coordinate GTP: Gln11, Glu69, Ser138, Gly142, Thr143, Gly144, Asn204, and Asn226. Glu69 is a Mg(2+) binding site. Residues 421 to 447 are disordered; it reads EYQQYQDASISEGEEEYEEEAPMEPEE. Acidic residues predominate over residues 432-447; it reads EGEEEYEEEAPMEPEE.

It belongs to the tubulin family. Dimer of alpha and beta chains. A typical microtubule is a hollow water-filled tube with an outer diameter of 25 nm and an inner diameter of 15 nM. Alpha-beta heterodimers associate head-to-tail to form protofilaments running lengthwise along the microtubule wall with the beta-tubulin subunit facing the microtubule plus end conferring a structural polarity. Microtubules usually have 13 protofilaments but different protofilament numbers can be found in some organisms and specialized cells. The cofactor is Mg(2+).

It localises to the cytoplasm. The protein localises to the cytoskeleton. Functionally, tubulin is the major constituent of microtubules, a cylinder consisting of laterally associated linear protofilaments composed of alpha- and beta-tubulin heterodimers. Microtubules grow by the addition of GTP-tubulin dimers to the microtubule end, where a stabilizing cap forms. Below the cap, tubulin dimers are in GDP-bound state, owing to GTPase activity of alpha-tubulin. The protein is Tubulin beta chain of Rhynchosporium secalis (Barley scald fungus).